A 295-amino-acid chain; its full sequence is GTPase Era (295 aa).

One can recognise an Era-type G domain in the interval 3–170 (KSGFVTIVGR…VDLMKTELPE (168 aa)). The segment at 11 to 18 (GRPNVGKS) is G1. Position 11-18 (11-18 (GRPNVGKS)) interacts with GTP. The tract at residues 37 to 41 (QTTRN) is G2. Residues 58–61 (DTPG) are G3. GTP-binding positions include 58 to 62 (DTPGI) and 120 to 123 (NKID). Residues 120-123 (NKID) form a G4 region. Positions 149–151 (IAA) are G5. The KH type-2 domain occupies 201–278 (LRDEVPHGIA…NVKIWVKVRK (78 aa)).

This sequence belongs to the TRAFAC class TrmE-Era-EngA-EngB-Septin-like GTPase superfamily. Era GTPase family. In terms of assembly, monomer.

The protein resides in the cytoplasm. It localises to the cell membrane. In terms of biological role, an essential GTPase that binds both GDP and GTP, with rapid nucleotide exchange. Plays a role in 16S rRNA processing and 30S ribosomal subunit biogenesis and possibly also in cell cycle regulation and energy metabolism. This is GTPase Era from Clostridium botulinum (strain Alaska E43 / Type E3).